The sequence spans 251 residues: MLGKKSDFTIHPINVLQDNIVWVWVHNCNAVVVDPSISGPVEKWLLEKNLSLKAILQTHHHDDHIGGTQKLIKTWPEAKVVASKKEHKRIPFQTFSVDDNDIFNLMDAEIKVIEVHGHTDNHIAFYISKQNAKCNILFPGDTLFGGGCGRLLEGSPVQMFESLYKLNSLPENTEIYPAHEYTESNLKWALSLEPGNISIIERLKLIQKKLQKGMSSLPSTLSEERKTNLFLIAENVEKFTMLRKHKDRWKC.

H59, H61, D63, H64, H118, D141, and H179 together coordinate Zn(2+).

Belongs to the metallo-beta-lactamase superfamily. Glyoxalase II family. Monomer. The cofactor is Zn(2+).

The enzyme catalyses an S-(2-hydroxyacyl)glutathione + H2O = a 2-hydroxy carboxylate + glutathione + H(+). It participates in secondary metabolite metabolism; methylglyoxal degradation; (R)-lactate from methylglyoxal: step 2/2. In terms of biological role, thiolesterase that catalyzes the hydrolysis of S-D-lactoyl-glutathione to form glutathione and D-lactic acid. The chain is Hydroxyacylglutathione hydrolase from Prochlorococcus marinus (strain NATL2A).